Here is a 363-residue protein sequence, read N- to C-terminus: Biotin synthase (363 aa).

Phosphoserine occurs at positions 13, 14, and 17. Residues 54–276 (KKVQQCTLLS…IATARICMPK (223 aa)) form the Radical SAM core domain. [4Fe-4S] cluster is bound by residues Cys69, Cys73, and Cys76. 4 residues coordinate [2Fe-2S] cluster: Cys113, Cys146, Cys206, and Arg280. The tract at residues 337-363 (EYGTSTEGEDGTFTLPPKERLAPSPSL) is disordered.

The protein belongs to the radical SAM superfamily. Biotin synthase family. [4Fe-4S] cluster is required as a cofactor. Requires [2Fe-2S] cluster as cofactor.

It carries out the reaction (4R,5S)-dethiobiotin + (sulfur carrier)-SH + 2 reduced [2Fe-2S]-[ferredoxin] + 2 S-adenosyl-L-methionine = (sulfur carrier)-H + biotin + 2 5'-deoxyadenosine + 2 L-methionine + 2 oxidized [2Fe-2S]-[ferredoxin]. The protein operates within cofactor biosynthesis; biotin biosynthesis; biotin from 7,8-diaminononanoate: step 2/2. Catalyzes the last step of biotin biosynthesis, the conversion of dethiobiotin to biotin. This chain is Biotin synthase (bio2), found in Schizosaccharomyces pombe (strain 972 / ATCC 24843) (Fission yeast).